We begin with the raw amino-acid sequence, 211 residues long: Probable nicotinate-nucleotide adenylyltransferase (211 aa).

The protein belongs to the NadD family.

It carries out the reaction nicotinate beta-D-ribonucleotide + ATP + H(+) = deamido-NAD(+) + diphosphate. Its pathway is cofactor biosynthesis; NAD(+) biosynthesis; deamido-NAD(+) from nicotinate D-ribonucleotide: step 1/1. Catalyzes the reversible adenylation of nicotinate mononucleotide (NaMN) to nicotinic acid adenine dinucleotide (NaAD). The chain is Probable nicotinate-nucleotide adenylyltransferase from Legionella pneumophila (strain Lens).